A 539-amino-acid chain; its full sequence is Phosphoenolpyruvate carboxykinase (ATP) (539 aa).

The substrate site is built by Arg-64, Tyr-206, and Lys-212. ATP contacts are provided by residues Lys-212, His-231, and 247-255 (GLSGTGKTT). The Mn(2+) site is built by Lys-212 and His-231. Residue Asp-268 coordinates Mn(2+). ATP is bound by residues Glu-296, Arg-332, 448-449 (RI), and Thr-454. Substrate is bound at residue Arg-332.

The protein belongs to the phosphoenolpyruvate carboxykinase (ATP) family. Monomer. It depends on Mn(2+) as a cofactor.

It is found in the cytoplasm. The catalysed reaction is oxaloacetate + ATP = phosphoenolpyruvate + ADP + CO2. Its pathway is carbohydrate biosynthesis; gluconeogenesis. Functionally, involved in the gluconeogenesis. Catalyzes the conversion of oxaloacetate (OAA) to phosphoenolpyruvate (PEP) through direct phosphoryl transfer between the nucleoside triphosphate and OAA. The protein is Phosphoenolpyruvate carboxykinase (ATP) of Yersinia pseudotuberculosis serotype O:1b (strain IP 31758).